A 415-amino-acid polypeptide reads, in one-letter code: UDP-galactose transporter homolog 1 (415 aa).

Residues 1 to 39 (MHLVPEGSESMSTQQNGSAQKPVTLNGSASTKGQAPEAP) are disordered. Polar residues predominate over residues 9-33 (ESMSTQQNGSAQKPVTLNGSASTKG). N-linked (GlcNAc...) asparagine glycans are attached at residues N16 and N26. 5 consecutive transmembrane segments (helical) span residues 45-65 (LIQL…WGVL), 95-115 (IVLN…YLYF), 132-152 (ILFP…FGYA), 161-181 (TFIL…LTIF), and 185-205 (YPLY…TFTL). A glycan (N-linked (GlcNAc...) asparagine) is linked at N221. The chain crosses the membrane as a helical span at residues 223–243 (SGSSLYGIFLLSINLLLDGLT). An N-linked (GlcNAc...) asparagine glycan is attached at N244. The next 3 membrane-spanning stretches (helical) occupy residues 281–301 (LLVM…PIPI), 325–345 (NVLG…YTLS), and 368–388 (VFWF…LVFG).

This sequence belongs to the nucleotide-sugar transporter family. SLC35B subfamily.

The protein localises to the endoplasmic reticulum membrane. May be involved in specific transport of UDP-Gal from the cytosol to the Golgi lumen. Involved in the maintenance of optimal conditions for the folding of secretory pathway proteins in the endoplasmic reticulum. The chain is UDP-galactose transporter homolog 1 (hut1) from Aspergillus fumigatus (strain ATCC MYA-4609 / CBS 101355 / FGSC A1100 / Af293) (Neosartorya fumigata).